Reading from the N-terminus, the 372-residue chain is MIRQRAWVEIDQAALVHNVRQFRQYVGPKTNLMAVVKADAYGHGAVRVAQTALQAGADWLAIATLGEGIELREAGITAPILLLGGINSPEEIEAIAHWRLQPTLCSPEQAQLFNDILLKLGKVLPVHLKLDTGMTRLGTPWPQAANFVGLVQSLPQLRLASLYSHLATADDPNTATMLQQQERFAKAIASLRQARLPIPKLHLANSAATLHGQAWHYDMVRVGLGLYGLYPAPHLGDCLDLKPVLTVRAKITQIRTIPPGTGVSYGHQFVSEETMPMAVVGIGYADGVPRNLSNQLEVLLRGQPVRQIGAITMDQMMVDLRGIDDPQVGEVVTLIGQDGDRQITADHWASTLGTISWEILCGFKHRLPRILI.

Residue Lys-37 is the Proton acceptor; specific for D-alanine of the active site. N6-(pyridoxal phosphate)lysine is present on Lys-37. Position 136 (Arg-136) interacts with substrate. Tyr-265 acts as the Proton acceptor; specific for L-alanine in catalysis. Position 313 (Met-313) interacts with substrate.

It belongs to the alanine racemase family. The cofactor is pyridoxal 5'-phosphate.

The catalysed reaction is L-alanine = D-alanine. It functions in the pathway amino-acid biosynthesis; D-alanine biosynthesis; D-alanine from L-alanine: step 1/1. Catalyzes the interconversion of L-alanine and D-alanine. May also act on other amino acids. The sequence is that of Alanine racemase (alr) from Synechocystis sp. (strain ATCC 27184 / PCC 6803 / Kazusa).